Consider the following 54-residue polypeptide: Large ribosomal subunit protein bL32c (54 aa).

This sequence belongs to the bacterial ribosomal protein bL32 family.

It is found in the plastid. Its subcellular location is the chloroplast. The chain is Large ribosomal subunit protein bL32c from Piper cenocladum (Ant piper).